We begin with the raw amino-acid sequence, 235 residues long: Phosphoribosylaminoimidazole-succinocarboxamide synthase (235 aa).

The protein belongs to the SAICAR synthetase family.

The enzyme catalyses 5-amino-1-(5-phospho-D-ribosyl)imidazole-4-carboxylate + L-aspartate + ATP = (2S)-2-[5-amino-1-(5-phospho-beta-D-ribosyl)imidazole-4-carboxamido]succinate + ADP + phosphate + 2 H(+). It functions in the pathway purine metabolism; IMP biosynthesis via de novo pathway; 5-amino-1-(5-phospho-D-ribosyl)imidazole-4-carboxamide from 5-amino-1-(5-phospho-D-ribosyl)imidazole-4-carboxylate: step 1/2. This is Phosphoribosylaminoimidazole-succinocarboxamide synthase from Clostridium acetobutylicum (strain ATCC 824 / DSM 792 / JCM 1419 / IAM 19013 / LMG 5710 / NBRC 13948 / NRRL B-527 / VKM B-1787 / 2291 / W).